The sequence spans 131 residues: MRVGVPPQIPRPSLNSAPSPFNPQGQSQITDPRQAQSPPPWSYDQSYPSYLSQMTSPSIHSTTPLSSTRGTGLPVITDVPRRISGASELGPFSDPRQFPSISSLTESRFSNPRMHYPATFTYTPPVTSGMS.

The 10-residue stretch at 1-10 (MRVGVPPQIP) folds into the Runt domain. Residues 1–75 (MRVGVPPQIP…SSTRGTGLPV (75 aa)) form a disordered region. Asymmetric dimethylarginine is present on Arg-11. Composition is skewed to polar residues over residues 13-36 (SLNS…RQAQ) and 43-70 (YDQS…STRG).

As to quaternary structure, heterodimer of an alpha and a beta subunit. The alpha subunit binds DNA as a monomer and through the Runt domain. DNA-binding is increased by heterodimerization. Interacts with XRCC6 (Ku70) and XRCC5 (Ku80). Interacts with CCNB1, KAT6A and KAT6B. Interacts with HIVEP3. Interacts with IFI204. Interaction with SATB2; the interaction results in enhanced DNA binding and transactivation by these transcription factors. Binds to HIPK3. Interacts with FOXO1 (via a C-terminal region); the interaction inhibits RUNX2 transcriptional activity towards BGLAP. This interaction is prevented on insulin or IGF1 stimulation as FOXO1 is exported from the nucleus. Interacts with FOXP3. Interacts with TMEM119. Interacts with OLFM2. Interacts with IPO7; the interaction inhibits RUNX2 nuclear translocation in osteoblasts. In terms of processing, phosphorylated; probably by MAP kinases (MAPK). Phosphorylation by HIPK3 is required for the SPEN/MINT and FGF2 transactivation during osteoblastic differentiation.

It localises to the nucleus. The protein resides in the cytoplasm. Functionally, transcription factor involved in osteoblastic differentiation and skeletal morphogenesis. Essential for the maturation of osteoblasts and both intramembranous and endochondral ossification. CBF binds to the core site, 5'-PYGPYGGT-3', of a number of enhancers and promoters, including murine leukemia virus, polyomavirus enhancer, T-cell receptor enhancers, osteocalcin, osteopontin, bone sialoprotein, alpha 1(I) collagen, LCK, IL-3 and GM-CSF promoters. Inhibits KAT6B-dependent transcriptional activation. In osteoblasts, supports transcription activation: synergizes with SPEN/MINT to enhance FGFR2-mediated activation of the osteocalcin FGF-responsive element (OCFRE). The chain is Runt-related transcription factor 2 (RUNX2) from Equus caballus (Horse).